A 276-amino-acid chain; its full sequence is MSLVLAVYGKGGIGKSTTSANISAALALKGAKVLQIGCDPKHDSTFPITGKLQKTVIEALEEVDFHHEELSPEDIVETGFAGIDGLEAGGPPAGSGCGGYVVGESVTLLQEMGVYDKYDVILFDVLGDVVCGGFSAPLNYADYAVIIATNDFDSIFAANRLCMAIQQKSVRYKVQLAGIVANRVDYTKGGGTNMLDQFAEQVGTRLLAKVPYHELIRKSRFAGKTLFAMDPNEPELAECLAPYNEIADQILSEKPIASVPKPIGDREIFDIVGGWQ.

Residues 12-17 (GIGKST) and Lys-41 each bind ATP. Ser-16 is a binding site for Mg(2+). Residues Cys-97 and Cys-131 each coordinate [4Fe-4S] cluster. 182-183 (NR) contributes to the ATP binding site.

It belongs to the NifH/BchL/ChlL family. Homodimer. Protochlorophyllide reductase is composed of three subunits; BchL, BchN and BchB. It depends on [4Fe-4S] cluster as a cofactor.

The catalysed reaction is chlorophyllide a + oxidized 2[4Fe-4S]-[ferredoxin] + 2 ADP + 2 phosphate = protochlorophyllide a + reduced 2[4Fe-4S]-[ferredoxin] + 2 ATP + 2 H2O. It participates in porphyrin-containing compound metabolism; bacteriochlorophyll biosynthesis (light-independent). In terms of biological role, component of the dark-operative protochlorophyllide reductase (DPOR) that uses Mg-ATP and reduced ferredoxin to reduce ring D of protochlorophyllide (Pchlide) to form chlorophyllide a (Chlide). This reaction is light-independent. The L component serves as a unique electron donor to the NB-component of the complex, and binds Mg-ATP. The polypeptide is Light-independent protochlorophyllide reductase iron-sulfur ATP-binding protein (Chlorobaculum tepidum (strain ATCC 49652 / DSM 12025 / NBRC 103806 / TLS) (Chlorobium tepidum)).